The primary structure comprises 320 residues: Ferrochelatase (320 aa).

Histidine 194 and glutamate 275 together coordinate Fe cation.

Belongs to the ferrochelatase family.

The protein resides in the cytoplasm. The catalysed reaction is heme b + 2 H(+) = protoporphyrin IX + Fe(2+). It functions in the pathway porphyrin-containing compound metabolism; protoheme biosynthesis; protoheme from protoporphyrin-IX: step 1/1. Its function is as follows. Catalyzes the ferrous insertion into protoporphyrin IX. The sequence is that of Ferrochelatase from Vibrio cholerae serotype O1 (strain ATCC 39315 / El Tor Inaba N16961).